A 391-amino-acid polypeptide reads, in one-letter code: Succinyl-diaminopimelate desuccinylase (391 aa).

Position 67 (His67) interacts with Zn(2+). The active site involves Asp69. Asp101 is a binding site for Zn(2+). Glu135 serves as the catalytic Proton acceptor. Zn(2+) is bound by residues Glu136, Glu164, and His353.

The protein belongs to the peptidase M20A family. DapE subfamily. As to quaternary structure, homodimer. Zn(2+) serves as cofactor. The cofactor is Co(2+).

It carries out the reaction N-succinyl-(2S,6S)-2,6-diaminopimelate + H2O = (2S,6S)-2,6-diaminopimelate + succinate. It participates in amino-acid biosynthesis; L-lysine biosynthesis via DAP pathway; LL-2,6-diaminopimelate from (S)-tetrahydrodipicolinate (succinylase route): step 3/3. Its function is as follows. Catalyzes the hydrolysis of N-succinyl-L,L-diaminopimelic acid (SDAP), forming succinate and LL-2,6-diaminopimelate (DAP), an intermediate involved in the bacterial biosynthesis of lysine and meso-diaminopimelic acid, an essential component of bacterial cell walls. The chain is Succinyl-diaminopimelate desuccinylase from Rickettsia bellii (strain RML369-C).